Reading from the N-terminus, the 480-residue chain is EGF-like repeat and discoidin I-like domain-containing protein 3 (480 aa).

Residues 1 to 23 (MKHLVAAWLLVGLSLGVPQFGKG) form the signal peptide. Residues 24 to 60 (DICNPNPCENGGICLSGLADDSFSCECPEGFAGPNCS) form the EGF-like 1 domain. 3 cysteine pairs are disulfide-bonded: C26–C37, C31–C48, and C50–C59. The O-linked (GalNAc...) threonine glycan is linked to T73. 2 consecutive EGF-like domains span residues 74–117 (SAGP…IHCQ) and 119–155 (NINE…RNCQ). Cystine bridges form between C78–C89, C83–C105, and C107–C116. An O-linked (Fuc...) threonine glycan is attached at T88. The short motif at 96–98 (RGD) is the Cell attachment site element. Ca(2+)-binding residues include N119, I120, and E122. 6 disulfides stabilise this stretch: C123-C134, C128-C143, C145-C154, C158-C314, C301-C305, and C319-C476. The Ca(2+) site is built by D136 and L137. The N-linked (GlcNAc...) asparagine glycan is linked to N140. F5/8 type C domains are found at residues 158–314 (CSGP…LLGC) and 319–476 (CSEP…LLGC).

As to expression, expressed in angioblasts and early endothelial cells. By embryonic day 13.5, also expressed in a restricted group of non-endothelial cells including chondrocytes and retinal neurons.

The protein resides in the secreted. Promotes adhesion of endothelial cells through interaction with the alpha-v/beta-3 integrin receptor. Inhibits formation of vascular-like structures. May be involved in regulation of vascular morphogenesis of remodeling in embryonic development. The sequence is that of EGF-like repeat and discoidin I-like domain-containing protein 3 (Edil3) from Mus musculus (Mouse).